The primary structure comprises 205 residues: Holliday junction branch migration complex subunit RuvA (205 aa).

The tract at residues 1–64 (MIGKLKGSIE…EDQLKLFGFV (64 aa)) is domain I. Positions 65-143 (SALEREWFNL…AFAGDASASI (79 aa)) are domain II. A flexible linker region spans residues 144–153 (GLKQELGEGV). The tract at residues 153 to 205 (VASAPVADAVSALTNLGYSRDQAANAVAAALKNGGEGGDSAKLIRLGLKELSR) is domain III.

It belongs to the RuvA family. Homotetramer. Forms an RuvA(8)-RuvB(12)-Holliday junction (HJ) complex. HJ DNA is sandwiched between 2 RuvA tetramers; dsDNA enters through RuvA and exits via RuvB. An RuvB hexamer assembles on each DNA strand where it exits the tetramer. Each RuvB hexamer is contacted by two RuvA subunits (via domain III) on 2 adjacent RuvB subunits; this complex drives branch migration. In the full resolvosome a probable DNA-RuvA(4)-RuvB(12)-RuvC(2) complex forms which resolves the HJ.

It is found in the cytoplasm. In terms of biological role, the RuvA-RuvB-RuvC complex processes Holliday junction (HJ) DNA during genetic recombination and DNA repair, while the RuvA-RuvB complex plays an important role in the rescue of blocked DNA replication forks via replication fork reversal (RFR). RuvA specifically binds to HJ cruciform DNA, conferring on it an open structure. The RuvB hexamer acts as an ATP-dependent pump, pulling dsDNA into and through the RuvAB complex. HJ branch migration allows RuvC to scan DNA until it finds its consensus sequence, where it cleaves and resolves the cruciform DNA. The sequence is that of Holliday junction branch migration complex subunit RuvA from Agrobacterium fabrum (strain C58 / ATCC 33970) (Agrobacterium tumefaciens (strain C58)).